The sequence spans 362 residues: UDP-N-acetylglucosamine--N-acetylmuramyl-(pentapeptide) pyrophosphoryl-undecaprenol N-acetylglucosamine transferase (362 aa).

Residues 15-17, Asn127, Arg165, Ser191, Ile247, 266-271, and Gln292 contribute to the UDP-N-acetyl-alpha-D-glucosamine site; these read TGG and ALTVSE.

This sequence belongs to the glycosyltransferase 28 family. MurG subfamily.

The protein resides in the cell inner membrane. The catalysed reaction is di-trans,octa-cis-undecaprenyl diphospho-N-acetyl-alpha-D-muramoyl-L-alanyl-D-glutamyl-meso-2,6-diaminopimeloyl-D-alanyl-D-alanine + UDP-N-acetyl-alpha-D-glucosamine = di-trans,octa-cis-undecaprenyl diphospho-[N-acetyl-alpha-D-glucosaminyl-(1-&gt;4)]-N-acetyl-alpha-D-muramoyl-L-alanyl-D-glutamyl-meso-2,6-diaminopimeloyl-D-alanyl-D-alanine + UDP + H(+). It participates in cell wall biogenesis; peptidoglycan biosynthesis. In terms of biological role, cell wall formation. Catalyzes the transfer of a GlcNAc subunit on undecaprenyl-pyrophosphoryl-MurNAc-pentapeptide (lipid intermediate I) to form undecaprenyl-pyrophosphoryl-MurNAc-(pentapeptide)GlcNAc (lipid intermediate II). The chain is UDP-N-acetylglucosamine--N-acetylmuramyl-(pentapeptide) pyrophosphoryl-undecaprenol N-acetylglucosamine transferase from Shewanella sp. (strain MR-4).